The following is a 78-amino-acid chain: Large ribosomal subunit protein bL28 (78 aa).

Residues 1 to 20 (MSRVCQVTGKGPVTGNNISH) are disordered.

It belongs to the bacterial ribosomal protein bL28 family.

This is Large ribosomal subunit protein bL28 from Pseudomonas putida (strain ATCC 700007 / DSM 6899 / JCM 31910 / BCRC 17059 / LMG 24140 / F1).